We begin with the raw amino-acid sequence, 428 residues long: MQELRLLCLVVLVGLAQACPEPCECGEKYGFHIADCAYRDLQAVPSGFPANVTTLSLSANQLPSLPGGAFREVPRLQSLWLAHNEIRSVAAGALASLSQLKSLDLSHNLISDFAWSDLHSLSALQLLKMDSNELTFIPRDAFRSLRALRSLQLNHNRLHTLAEGTFAPLTALSHLQINDNPFDCTCGIVWFKTWALTTAVSIPEQDNITCTSPHVLKGTRLNRLLPLPCSAPSVQLTYQPSQDGAELRPGFVLALHCDVDGQPAPQLHWHIQTPGGTVEITSPNVGADGRALPGVLAASSRPRFQAFANGSLLIPDFGKLEEGTYSCLATNELGSAESSVNVALATPGEGGEDALGRRFQGKAAEGKVCYTVDNEVQPSGPEDNVVIIYLSRARGPEAAATAEGVPGKQPPGLLLLGQSLLFLFLASF.

Residues 1 to 18 (MQELRLLCLVVLVGLAQA) form the signal peptide. The LRRNT domain maps to 19–50 (CPEPCECGEKYGFHIADCAYRDLQAVPSGFPA). An N-linked (GlcNAc...) asparagine glycan is attached at N51. LRR repeat units lie at residues 51–72 (NVTT…AFRE), 75–96 (RLQS…ALAS), 99–122 (QLKS…HSLS), 123–144 (ALQL…AFRS), and 147–168 (ALRS…TFAP). The region spanning 180-231 (NPFDCTCGIVWFKTWALTTAVSIPEQDNITCTSPHVLKGTRLNRLLPLPCSA) is the LRRCT domain. The region spanning 232-343 (PSVQLTYQPS…GSAESSVNVA (112 aa)) is the Ig-like domain. C257 and C327 are oxidised to a cystine. Residue N309 is glycosylated (N-linked (GlcNAc...) asparagine).

Its subcellular location is the secreted. The sequence is that of Immunoglobulin superfamily containing leucine-rich repeat protein (ISLR) from Bos taurus (Bovine).